The chain runs to 431 residues: Arginine biosynthesis bifunctional protein ArgJ, mitochondrial (431 aa).

Substrate-binding residues include threonine 174, lysine 200, threonine 211, glutamate 297, asparagine 426, and threonine 431. The active-site Nucleophile is threonine 211.

It belongs to the ArgJ family. Heterodimer of an alpha and a beta chain. The alpha and beta chains are autoproteolytically processed from a single precursor protein within the mitochondrion.

Its subcellular location is the mitochondrion matrix. It catalyses the reaction N(2)-acetyl-L-ornithine + L-glutamate = N-acetyl-L-glutamate + L-ornithine. It carries out the reaction L-glutamate + acetyl-CoA = N-acetyl-L-glutamate + CoA + H(+). It participates in amino-acid biosynthesis; L-arginine biosynthesis; L-ornithine and N-acetyl-L-glutamate from L-glutamate and N(2)-acetyl-L-ornithine (cyclic): step 1/1. It functions in the pathway amino-acid biosynthesis; L-arginine biosynthesis; N(2)-acetyl-L-ornithine from L-glutamate: step 1/4. Functionally, catalyzes two activities which are involved in the cyclic version of arginine biosynthesis: the synthesis of acetylglutamate from glutamate and acetyl-CoA, and of ornithine by transacetylation between acetylornithine and glutamate. The sequence is that of Arginine biosynthesis bifunctional protein ArgJ, mitochondrial from Yarrowia lipolytica (strain CLIB 122 / E 150) (Yeast).